Consider the following 460-residue polypeptide: NADH-ubiquinone oxidoreductase chain 4 (460 aa).

13 helical membrane-spanning segments follow: residues 20–42, 61–81, 94–113, 117–139, 148–168, 195–215, 225–245, 258–278, 285–304, 308–330, 351–371, 394–414, and 436–456; these read AKWL…LSWL, PLST…ILAS, RAYI…AFGA, IMFY…RWGN, TYFL…LLLM, LWWA…GVHL, PIAG…YGMM, LAYP…SICL, SLIA…GILI, WGFT…LFCL, MILP…LALP, LILT…LFLM, and LLII…ELMW.

The protein belongs to the complex I subunit 4 family.

It is found in the mitochondrion membrane. The enzyme catalyses a ubiquinone + NADH + 5 H(+)(in) = a ubiquinol + NAD(+) + 4 H(+)(out). Its function is as follows. Core subunit of the mitochondrial membrane respiratory chain NADH dehydrogenase (Complex I) that is believed to belong to the minimal assembly required for catalysis. Complex I functions in the transfer of electrons from NADH to the respiratory chain. The immediate electron acceptor for the enzyme is believed to be ubiquinone. This Oncorhynchus mykiss (Rainbow trout) protein is NADH-ubiquinone oxidoreductase chain 4 (MT-ND4).